We begin with the raw amino-acid sequence, 115 residues long: Protein Diedel (115 aa).

An N-terminal signal peptide occupies residues 1–24 (MASPVVSLLLVGICALAFVHVARS). 5 cysteine pairs are disulfide-bonded: Cys-26–Cys-81, Cys-27–Cys-87, Cys-42–Cys-55, Cys-60–Cys-71, and Cys-76–Cys-83.

This sequence belongs to the Diedel family. Detected in hemolymph (at protein level). Also expressed in the fat body and is probably synthesized in the fat body and secreted into the hemolymph.

It is found in the secreted. Cytokine which promotes survival following infection by Sindbis virus by suppressing the immune deficiency pathway. Following infection by the enteropathogenic bacteria E.carotovora limits intestinal stem cells proliferation. When secreted from muscle or adipose tissue, can attenuate age-related intestinal tissue degeneration by inhibiting apoptosis. In Drosophila melanogaster (Fruit fly), this protein is Protein Diedel.